Consider the following 757-residue polypeptide: 5-methyltetrahydropteroyltriglutamate--homocysteine methyltransferase (757 aa).

Residues 15–18 and Lys114 each bind 5-methyltetrahydropteroyltri-L-glutamate; that span reads RELK. Residues 428 to 430 and Glu481 contribute to the L-homocysteine site; that span reads IGS. L-methionine-binding positions include 428–430 and Glu481; that span reads IGS. Residues 512-513 and Trp558 contribute to the 5-methyltetrahydropteroyltri-L-glutamate site; that span reads RC. Asp596 is a binding site for L-homocysteine. Asp596 provides a ligand contact to L-methionine. Glu602 contacts 5-methyltetrahydropteroyltri-L-glutamate. Residues His639, Cys641, and Glu663 each coordinate Zn(2+). His692 serves as the catalytic Proton donor. Cys724 contributes to the Zn(2+) binding site.

The protein belongs to the vitamin-B12 independent methionine synthase family. Zn(2+) is required as a cofactor.

It catalyses the reaction 5-methyltetrahydropteroyltri-L-glutamate + L-homocysteine = tetrahydropteroyltri-L-glutamate + L-methionine. Its pathway is amino-acid biosynthesis; L-methionine biosynthesis via de novo pathway; L-methionine from L-homocysteine (MetE route): step 1/1. Functionally, catalyzes the transfer of a methyl group from 5-methyltetrahydrofolate to homocysteine resulting in methionine formation. This Lactococcus lactis subsp. cremoris (strain SK11) protein is 5-methyltetrahydropteroyltriglutamate--homocysteine methyltransferase.